We begin with the raw amino-acid sequence, 912 residues long: Microtubule-associated protein 10 (912 aa).

Disordered stretches follow at residues 31–50, 209–239, 254–296, 335–366, 443–469, and 730–859; these read VAEE…RPSR, KSVE…ADKP, GRAF…QEGT, ASEE…SATG, SPES…NEKS, and RACD…VSSY. The segment covering 211–229 has biased composition (polar residues); sequence VEVSPQTWQENQQLQQPDS. The segment covering 254–263 has biased composition (basic and acidic residues); the sequence is GRAFHSKADS. A compositionally biased stretch (polar residues) spans 266–295; the sequence is TDSMENGKTNSDMCSKGSSERSVSPPNQEG. The span at 347 to 362 shows a compositional bias: low complexity; that stretch reads ENVNPPTHTNPPEHTN. The span at 452 to 468 shows a compositional bias: basic and acidic residues; sequence CKSESKKDKLSVGENEK. Residues 735 to 768 are compositionally biased toward polar residues; it reads SPGTENPKNSQHTSTSSETRLSIRKNSSAKSSIL. The segment covering 796-807 has biased composition (low complexity); sequence EASSSDFSSSQW. Over residues 841 to 859 the composition is skewed to polar residues; it reads GCKSSEKSQSPRTSQVSSY.

In terms of assembly, interacts (via middle region) with microtubules.

It localises to the cytoplasm. The protein resides in the cytoskeleton. It is found in the spindle pole. Its subcellular location is the microtubule organizing center. The protein localises to the centrosome. It localises to the midbody. In terms of biological role, microtubule-associated protein (MAP) that plays a role in the regulation of cell division; promotes microtubule stability and participates in the organization of the spindle midzone and normal progress of cytokinesis. This Bos taurus (Bovine) protein is Microtubule-associated protein 10 (MAP10).